Here is a 490-residue protein sequence, read N- to C-terminus: Ketol-acid reductoisomerase (NADP(+)) (490 aa).

One can recognise a KARI N-terminal Rossmann domain in the interval 16-207 (INKCRFMKKE…GGHRAGVLES (192 aa)). NADP(+)-binding positions include 44–47 (CGAQ), Lys67, Ser77, and 107–109 (DKQ). Residue His131 is part of the active site. Position 157 (Gly157) interacts with NADP(+). 2 consecutive KARI C-terminal knotted domains span residues 208 to 343 (SFIA…TAPV) and 344 to 483 (YNEK…MKKM). The Mg(2+) site is built by Asp216, Glu220, Glu388, and Glu392. Residue Ser413 coordinates substrate.

It belongs to the ketol-acid reductoisomerase family. Requires Mg(2+) as cofactor.

The catalysed reaction is (2R)-2,3-dihydroxy-3-methylbutanoate + NADP(+) = (2S)-2-acetolactate + NADPH + H(+). The enzyme catalyses (2R,3R)-2,3-dihydroxy-3-methylpentanoate + NADP(+) = (S)-2-ethyl-2-hydroxy-3-oxobutanoate + NADPH + H(+). The protein operates within amino-acid biosynthesis; L-isoleucine biosynthesis; L-isoleucine from 2-oxobutanoate: step 2/4. It participates in amino-acid biosynthesis; L-valine biosynthesis; L-valine from pyruvate: step 2/4. Functionally, involved in the biosynthesis of branched-chain amino acids (BCAA). Catalyzes an alkyl-migration followed by a ketol-acid reduction of (S)-2-acetolactate (S2AL) to yield (R)-2,3-dihydroxy-isovalerate. In the isomerase reaction, S2AL is rearranged via a Mg-dependent methyl migration to produce 3-hydroxy-3-methyl-2-ketobutyrate (HMKB). In the reductase reaction, this 2-ketoacid undergoes a metal-dependent reduction by NADPH to yield (R)-2,3-dihydroxy-isovalerate. In Buchnera aphidicola subsp. Acyrthosiphon pisum (strain 5A), this protein is Ketol-acid reductoisomerase (NADP(+)).